The primary structure comprises 152 residues: D-aminoacyl-tRNA deacylase (152 aa).

Residues 142-143 (GP) carry the Gly-cisPro motif, important for rejection of L-amino acids motif.

It belongs to the DTD family. In terms of assembly, homodimer.

It is found in the cytoplasm. It catalyses the reaction glycyl-tRNA(Ala) + H2O = tRNA(Ala) + glycine + H(+). The enzyme catalyses a D-aminoacyl-tRNA + H2O = a tRNA + a D-alpha-amino acid + H(+). In terms of biological role, an aminoacyl-tRNA editing enzyme that deacylates mischarged D-aminoacyl-tRNAs. Also deacylates mischarged glycyl-tRNA(Ala), protecting cells against glycine mischarging by AlaRS. Acts via tRNA-based rather than protein-based catalysis; rejects L-amino acids rather than detecting D-amino acids in the active site. By recycling D-aminoacyl-tRNA to D-amino acids and free tRNA molecules, this enzyme counteracts the toxicity associated with the formation of D-aminoacyl-tRNA entities in vivo and helps enforce protein L-homochirality. The sequence is that of D-aminoacyl-tRNA deacylase from Burkholderia mallei (strain NCTC 10247).